We begin with the raw amino-acid sequence, 625 residues long: Coagulation factor XI (625 aa).

The N-terminal stretch at 1–18 (MTLLYQMVHFALFASVAG) is a signal peptide. Apple domains follow at residues 20 to 103 (CVTT…SKQC), 110 to 193 (CSKD…LKSC), 200 to 283 (CIRD…LQHC), and 291 to 374 (CHSS…LRLC). Intrachain disulfides connect Cys-20/Cys-103, Cys-46/Cys-76, Cys-50/Cys-56, Cys-110/Cys-193, Cys-136/Cys-165, Cys-140/Cys-146, Cys-200/Cys-283, Cys-226/Cys-255, Cys-230/Cys-236, Cys-291/Cys-374, Cys-317/Cys-346, Cys-321/Cys-327, Cys-380/Cys-500, Cys-416/Cys-432, Cys-514/Cys-581, Cys-545/Cys-560, and Cys-571/Cys-599. N-linked (GlcNAc...) asparagine glycans are attached at residues Asn-90 and Asn-126. Residues 388 to 623 (IVGGTQSVHG…YVDWILEKTQ (236 aa)) form the Peptidase S1 domain. The active-site Charge relay system is His-431. Residue Asn-450 is glycosylated (N-linked (GlcNAc...) asparagine). Asp-480 serves as the catalytic Charge relay system. N-linked (GlcNAc...) asparagine glycosylation is present at Asn-491. 547 to 550 (AGYR) serves as a coordination point for heparin. Ser-575 (charge relay system) is an active-site residue.

Belongs to the peptidase S1 family. Plasma kallikrein subfamily. Homodimer; disulfide-linked. After activation the heavy and light chains are also linked by a disulfide bond. Interacts (activated) with F9 (inactive and activated) in calcium-dependent manner. Forms a heterodimer with SERPINA5. Post-translationally, activated by factor XIIa (or XII), which cleaves each polypeptide after Arg-387 into the light chain, which contains the active site, and the heavy chain, which associates with high molecular weight (HMW) kininogen. Activated by F12 (activated); the presence of negatively charged surfaces accelerates activation. Activated by F2 (thrombin); the presence of negatively charged surfaces, such as polyphosphate and dextran sulfate, strongly accelerates activation. Autoactivated; the presence of negatively charged surfaces, such as polyphosphate and dextran sulfate, accelerates autoactivation and autolysis. N-glycosylated on both chains. N-glycosylated sites mainly consist of nonfucosylated sialylated biantennary (in high abundance) and/or triantennary (in low abundance) complex structures.

The protein localises to the secreted. It carries out the reaction Selective cleavage of Arg-|-Ala and Arg-|-Val bonds in factor IX to form factor IXa.. With respect to regulation, inhibited by SERPINA5. Factor XI triggers the middle phase of the intrinsic pathway of blood coagulation by activating factor IX. This chain is Coagulation factor XI (F11), found in Bos taurus (Bovine).